A 257-amino-acid chain; its full sequence is Ribosomal RNA small subunit methyltransferase J (257 aa).

S-adenosyl-L-methionine-binding positions include 107 to 108 (RD), 123 to 124 (ER), and Asp-177.

The protein belongs to the methyltransferase superfamily. RsmJ family.

The protein resides in the cytoplasm. It catalyses the reaction guanosine(1516) in 16S rRNA + S-adenosyl-L-methionine = N(2)-methylguanosine(1516) in 16S rRNA + S-adenosyl-L-homocysteine + H(+). Functionally, specifically methylates the guanosine in position 1516 of 16S rRNA. This is Ribosomal RNA small subunit methyltransferase J from Haemophilus influenzae (strain PittEE).